Consider the following 23-residue polypeptide: Conotoxin Cl6c (23 aa).

3 disulfide bridges follow: cysteine 2–cysteine 12, cysteine 5–cysteine 17, and cysteine 11–cysteine 21.

As to expression, expressed by the venom duct.

It localises to the secreted. This chain is Conotoxin Cl6c, found in Californiconus californicus (California cone).